The following is a 441-amino-acid chain: NADH-quinone oxidoreductase subunit D 1 (441 aa).

The protein belongs to the complex I 49 kDa subunit family. As to quaternary structure, NDH-1 is composed of 14 different subunits. Subunits NuoB, C, D, E, F, and G constitute the peripheral sector of the complex.

The protein resides in the cell membrane. It carries out the reaction a quinone + NADH + 5 H(+)(in) = a quinol + NAD(+) + 4 H(+)(out). NDH-1 shuttles electrons from NADH, via FMN and iron-sulfur (Fe-S) centers, to quinones in the respiratory chain. The immediate electron acceptor for the enzyme in this species is believed to be a menaquinone. Couples the redox reaction to proton translocation (for every two electrons transferred, four hydrogen ions are translocated across the cytoplasmic membrane), and thus conserves the redox energy in a proton gradient. The chain is NADH-quinone oxidoreductase subunit D 1 from Salinispora tropica (strain ATCC BAA-916 / DSM 44818 / JCM 13857 / NBRC 105044 / CNB-440).